Reading from the N-terminus, the 123-residue chain is MEQVPVLAEDQRNLNEFSVLHSRKAIQELDIKNLKTQIEDIVDAKNECELLDEDDGDDIPALKVGDAFFQVSLPVLLDQLEQSEESLEKQVDVLRSSMEKDETRIQELKSMLYSKFHDQINLD.

The protein belongs to the prefoldin subunit beta family. In terms of assembly, heterohexamer of two PFD-alpha type and four PFD-beta type subunits.

Functionally, binds specifically to cytosolic chaperonin (c-CPN) and transfers target proteins to it. Binds to nascent polypeptide chain and promotes folding in an environment in which there are many competing pathways for nonnative proteins. The chain is Probable prefoldin subunit 4 from Schizosaccharomyces pombe (strain 972 / ATCC 24843) (Fission yeast).